The chain runs to 223 residues: UPF0441 protein YgiB (223 aa).

Positions 178–195 are enriched in low complexity; that stretch reads TVPKTAMAPKPATTTTVT. Residues 178-223 are disordered; the sequence is TVPKTAMAPKPATTTTVTRGGFGESVAKQSTMQRSATGTSSRSMGG. The span at 204-223 shows a compositional bias: polar residues; it reads AKQSTMQRSATGTSSRSMGG.

It belongs to the UPF0441 family.

The protein is UPF0441 protein YgiB of Shigella dysenteriae serotype 1 (strain Sd197).